The sequence spans 152 residues: UPF0266 membrane protein YobD (152 aa).

A run of 3 helical transmembrane segments spans residues 6–26, 45–65, and 67–87; these read LVLI…QFIM, IDSV…VTNH, and ALIT…IFWI.

This sequence belongs to the UPF0266 family.

The protein localises to the cell inner membrane. The sequence is that of UPF0266 membrane protein YobD from Shigella boydii serotype 18 (strain CDC 3083-94 / BS512).